The following is a 249-amino-acid chain: Large ribosomal subunit protein uL22m (249 aa).

The transit peptide at 1 to 22 directs the protein to the mitochondrion; that stretch reads MKYINQFMKISKGFLVPSSTIG. Residues 70–98 are disordered; sequence ANQKDDSNRQQKEERVKERPRSRISFKKQ. Basic and acidic residues predominate over residues 72 to 98; it reads QKDDSNRQQKEERVKERPRSRISFKKQ.

This sequence belongs to the universal ribosomal protein uL22 family. Component of the mitochondrial large ribosomal subunit (mt-LSU). Mature yeast 74S mitochondrial ribosomes consist of a small (37S) and a large (54S) subunit. The 37S small subunit contains a 15S ribosomal RNA (15S mt-rRNA) and at least 32 different proteins. The 54S large subunit contains a 21S rRNA (21S mt-rRNA) and at least 45 different proteins. uL22m forms the wall of the exit tunnel.

It is found in the mitochondrion. Its function is as follows. Component of the mitochondrial ribosome (mitoribosome), a dedicated translation machinery responsible for the synthesis of mitochondrial genome-encoded proteins, including at least some of the essential transmembrane subunits of the mitochondrial respiratory chain. The mitoribosomes are attached to the mitochondrial inner membrane and translation products are cotranslationally integrated into the membrane. This Schizosaccharomyces pombe (strain 972 / ATCC 24843) (Fission yeast) protein is Large ribosomal subunit protein uL22m (mrpl22).